Consider the following 236-residue polypeptide: MDHIHHLLSSHGFTRTRLAKSKPIVVHAIAGSGKSTVIRKILSDLPNARAYTLGKPDPYSLSNPTIKAFAQFKRGTLDILDEYGQLPFADLDSSFEFIFTDPYQAPTDNLFEPHYTLEITYRFGPNTCNLLNQAFQSNITSLVTQDNISFGSPYLVDPVGTILAFQPDTYLILCLHQAPFFKVSEVIGYQWPTVTLYLACKISEIPEEERHLLFIGLTRHTESLLILGPDAFDSSP.

The (+)RNA virus helicase ATP-binding domain occupies Met1–Leu117. In terms of domain architecture, (+)RNA virus helicase C-terminal spans Glu118–Pro236.

The protein belongs to the Tymovirales TGBp1 protein family. In terms of assembly, homodimer and homooligomer. Interacts with capsid protein. Interacts with host AGO1; this interaction targets the host protein for degradation, thereby suppressing the antiviral RNA silencing.

The protein resides in the host cytoplasm. In terms of biological role, transports viral genome to neighboring plant cells directly through plasmosdesmata, without any budding. The movement protein allows efficient cell to cell propagation, by bypassing the host cell wall barrier. Increases plasmodesma size exclusion limit. Acts as a suppressor of RNA-mediated gene silencing, also known as post-transcriptional gene silencing (PTGS), a mechanism of plant viral defense that limits the accumulation of viral RNAs. This White clover mosaic virus (strain O) (WCMV) protein is Movement and silencing protein TGBp1.